We begin with the raw amino-acid sequence, 85 residues long: Large ribosomal subunit protein eL34 (85 aa).

The protein belongs to the eukaryotic ribosomal protein eL34 family.

The polypeptide is Large ribosomal subunit protein eL34 (Saccharolobus islandicus (strain Y.N.15.51 / Yellowstone #2) (Sulfolobus islandicus)).